Here is an 830-residue protein sequence, read N- to C-terminus: Ribosome biogenesis protein ERB1 (830 aa).

Positions 1-141 (MAPQPLKVGT…ENKDLPVDEK (141 aa)) are disordered. 2 stretches are compositionally biased toward acidic residues: residues 35–44 (VSEESDEEFG) and 52–109 (MSDD…DSDS). A compositionally biased stretch (basic and acidic residues) spans 131–141 (EENKDLPVDEK). WD repeat units lie at residues 481–520 (PGDT…EVWR), 523–563 (LHAG…APHI), 660–698 (KTPG…LIRT), 701–740 (SGVK…KPYK), 744–783 (YHNR…DLMQ), and 799–830 (IDGI…LWCS).

This sequence belongs to the WD repeat BOP1/ERB1 family. In terms of assembly, component of the NOP7 complex, composed of ERB1, NOP7 and YTM1. The complex is held together by ERB1, which interacts with NOP7 via its N-terminal domain and with YTM1 via a high-affinity interaction between the seven-bladed beta-propeller domains of the 2 proteins. The NOP7 complex associates with the 66S pre-ribosome.

Its subcellular location is the nucleus. The protein localises to the nucleolus. It localises to the nucleoplasm. Component of the NOP7 complex, which is required for maturation of the 25S and 5.8S ribosomal RNAs and formation of the 60S ribosome. This is Ribosome biogenesis protein ERB1 from Cryptococcus neoformans var. neoformans serotype D (strain B-3501A) (Filobasidiella neoformans).